The primary structure comprises 273 residues: Tryptase (273 aa).

The signal sequence occupies residues 1 to 18 (MLKLLLLTLPLLSSLVHA). Residues 19–28 (APSLAMPREG) constitute a propeptide, activation peptide. A Peptidase S1 domain is found at 29-270 (IVGGQEASGN…YLDWIYRYVP (242 aa)). An N-linked (GlcNAc...) asparagine glycan is attached at N49. C57 and C73 form a disulfide bridge. Catalysis depends on charge relay system residues H72 and D119. Intrachain disulfides connect C153–C228, C186–C209, and C218–C246. S222 functions as the Charge relay system in the catalytic mechanism.

It belongs to the peptidase S1 family. Tryptase subfamily. In terms of assembly, homotetramer. Glycosylated. Mast cells.

It localises to the secreted. The enzyme catalyses Preferential cleavage: Arg-|-Xaa, Lys-|-Xaa, but with more restricted specificity than trypsin.. In terms of biological role, tryptase is the major neutral protease present in mast cells and is secreted upon the coupled activation-degranulation response of this cell type. May play a role in innate immunity. The chain is Tryptase (Tpsab1) from Rattus norvegicus (Rat).